The following is a 395-amino-acid chain: Fe(3+) ions import ATP-binding protein FbpC 2 (395 aa).

The interval 1–21 (MHIAQELADETCNSPRGAGHA) is disordered. The region spanning 23 to 264 (LRYPSDRRTA…PKTLFVADFI (242 aa)) is the ABC transporter domain. Residue 66 to 73 (GPSGCGKT) participates in ATP binding.

Belongs to the ABC transporter superfamily. Fe(3+) ion importer (TC 3.A.1.10) family. As to quaternary structure, the complex is composed of two ATP-binding proteins (FbpC), two transmembrane proteins (FbpB) and a solute-binding protein (FbpA).

The protein resides in the cell inner membrane. The catalysed reaction is Fe(3+)(out) + ATP + H2O = Fe(3+)(in) + ADP + phosphate + H(+). In terms of biological role, part of the ABC transporter complex FbpABC involved in Fe(3+) ions import. Responsible for energy coupling to the transport system. The polypeptide is Fe(3+) ions import ATP-binding protein FbpC 2 (Rhizobium meliloti (strain 1021) (Ensifer meliloti)).